Consider the following 576-residue polypeptide: MIRTLIALVPADKRGTLGLYTVLTVLSVVIRAAGTVLLVPLVAALFGDTPQDAWPWLGWLTAATAAGWIVDTTTSRLGFDLGFAVLDHTQHDVADRMPNIRLDWLTAENTATARAAIASTGPELVGLVVNLLTPLIGAVLLPAAIAVALVAVSPPLGLAALAGVVVLLGAMWASNRLSRKADTVADETNSAFTERIIEFARTQQALRAARRVEPARSLVGDALGAQHGAGVRLLAMQIPGQLLFSLASQLALILLAGMATWLTVRGELSVPEAVAMIVVVARYLEPFTSLSELTPAIESTRGTLGRIRAVLDAPTLTAGDAAPADTKSAPRIEFDCVTFGYGDHPVLDDVSFVLEPGSTTAIVGPSGSGKSTILSLIAGLHQPTEGRVLIDGVDAASLDDESRRAATSVVFQQPYLFDGSIRDNILVGDPGADEDRLAAAVRLARVDELTARLPNGDASKVGEAGAALSGGERQRVSIARALVKPAPVLLVDEATSALDTENEAAVVDALTADLRHRTRVIVAHRLASIRHADRVLFLDGGRIVEDGTIDGLLAAGGRFDEFWRRQHEAADWQITH.

Topologically, residues 1–25 (MIRTLIALVPADKRGTLGLYTVLTV) are cytoplasmic. The region spanning 19-299 (LYTVLTVLSV…LSELTPAIES (281 aa)) is the ABC transmembrane type-1 domain. Residues 26–46 (LSVVIRAAGTVLLVPLVAALF) form a helical membrane-spanning segment. Over 47–52 (GDTPQD) the chain is Periplasmic. A helical membrane pass occupies residues 53 to 73 (AWPWLGWLTAATAAGWIVDTT). Residues 74 to 131 (TSRLGFDLGFAVLDHTQHDVADRMPNIRLDWLTAENTATARAAIASTGPELVGLVVNL) lie on the Cytoplasmic side of the membrane. 2 consecutive transmembrane segments (helical) span residues 132–152 (LTPLIGAVLLPAAIAVALVAV) and 153–173 (SPPLGLAALAGVVVLLGAMWA). Over 174 to 241 (SNRLSRKADT…RLLAMQIPGQ (68 aa)) the chain is Cytoplasmic. A helical membrane pass occupies residues 242–262 (LLFSLASQLALILLAGMATWL). Residues 263-267 (TVRGE) lie on the Periplasmic side of the membrane. A helical membrane pass occupies residues 268–288 (LSVPEAVAMIVVVARYLEPFT). Topologically, residues 289–576 (SLSELTPAIE…HEAADWQITH (288 aa)) are cytoplasmic. In terms of domain architecture, ABC transporter spans 332-565 (IEFDCVTFGY…GGRFDEFWRR (234 aa)). 364 to 371 (GPSGSGKS) is a binding site for ATP.

The protein belongs to the ABC transporter superfamily. Siderophore-Fe(3+) uptake transporter (SIUT) (TC 3.A.1.21) family. In terms of assembly, forms a heterodimer with IrtA.

It is found in the cell inner membrane. Functionally, part of the ABC transporter complex IrtAB involved in the import of iron-bound mycobactin (Fe-MBT) and carboxymycobactin (Fe-cMBT). Has a preference for Fe-MBT over Fe-cMBT. Transmembrane domains (TMD) form a pore in the membrane and the ATP-binding domain (NBD) is responsible for energy generation. The chain is Mycobactin import ATP-binding/permease protein IrtB from Mycolicibacterium smegmatis (strain ATCC 700084 / mc(2)155) (Mycobacterium smegmatis).